The sequence spans 227 residues: Octanoyltransferase (227 aa).

The BPL/LPL catalytic domain occupies 35-222 (EAYENRIIMC…ELGRLLNEKK (188 aa)). Substrate is bound by residues 80-87 (RGGDITYH), 152-154 (AIG), and 165-167 (GLA). Cys-183 functions as the Acyl-thioester intermediate in the catalytic mechanism.

This sequence belongs to the LipB family.

The protein localises to the cytoplasm. It carries out the reaction octanoyl-[ACP] + L-lysyl-[protein] = N(6)-octanoyl-L-lysyl-[protein] + holo-[ACP] + H(+). It participates in protein modification; protein lipoylation via endogenous pathway; protein N(6)-(lipoyl)lysine from octanoyl-[acyl-carrier-protein]: step 1/2. Its function is as follows. Catalyzes the transfer of endogenously produced octanoic acid from octanoyl-acyl-carrier-protein onto the lipoyl domains of lipoate-dependent enzymes. Lipoyl-ACP can also act as a substrate although octanoyl-ACP is likely to be the physiological substrate. The protein is Octanoyltransferase of Bacteroides thetaiotaomicron (strain ATCC 29148 / DSM 2079 / JCM 5827 / CCUG 10774 / NCTC 10582 / VPI-5482 / E50).